Consider the following 563-residue polypeptide: Type 2 DNA topoisomerase 6 subunit B (563 aa).

Residues asparagine 46, aspartate 78, threonine 99–lysine 100, glycine 109–serine 116, and lysine 471 contribute to the ATP site.

It belongs to the TOP6B family. As to quaternary structure, homodimer. Heterotetramer of two Top6A and two Top6B chains.

It carries out the reaction ATP-dependent breakage, passage and rejoining of double-stranded DNA.. Relaxes both positive and negative superturns and exhibits a strong decatenase activity. In Thermococcus onnurineus (strain NA1), this protein is Type 2 DNA topoisomerase 6 subunit B.